Consider the following 307-residue polypeptide: RHOMBOID-like protein 6, mitochondrial (307 aa).

The N-terminal 62 residues, 1–62 (MRSRDMERGR…DCVAKLLRRF (62 aa)), are a transit peptide targeting the mitochondrion. A run of 6 helical transmembrane segments spans residues 105 to 125 (WLHA…IFGI), 136 to 156 (IGLI…LFLQ), 159 to 179 (ISVG…SELL), 191 to 211 (ALLS…LPWV), 214 to 234 (FAHI…LMQP), and 262 to 282 (LFFV…VMLF). Catalysis depends on Ser164, which acts as the Nucleophile. His216 serves as the catalytic Charge relay system.

This sequence belongs to the peptidase S54 family.

The protein localises to the mitochondrion membrane. The enzyme catalyses Cleaves type-1 transmembrane domains using a catalytic dyad composed of serine and histidine that are contributed by different transmembrane domains.. In terms of biological role, probable rhomboid-type serine protease that catalyzes intramembrane proteolysis. Might be involved in response to abiotic stimuli. In Arabidopsis thaliana (Mouse-ear cress), this protein is RHOMBOID-like protein 6, mitochondrial.